We begin with the raw amino-acid sequence, 292 residues long: ATP synthase gamma chain (292 aa).

It belongs to the ATPase gamma chain family. In terms of assembly, F-type ATPases have 2 components, CF(1) - the catalytic core - and CF(0) - the membrane proton channel. CF(1) has five subunits: alpha(3), beta(3), gamma(1), delta(1), epsilon(1). CF(0) has three main subunits: a, b and c.

The protein resides in the cell inner membrane. Functionally, produces ATP from ADP in the presence of a proton gradient across the membrane. The gamma chain is believed to be important in regulating ATPase activity and the flow of protons through the CF(0) complex. The protein is ATP synthase gamma chain of Nautilia profundicola (strain ATCC BAA-1463 / DSM 18972 / AmH).